The sequence spans 952 residues: Meiosis-specific coiled-coil domain-containing protein MEIOC (952 aa).

Disordered regions lie at residues 1–23 (MEVR…EGLE), 609–629 (QAKP…LDGL), and 933–952 (VHES…TNKH). Residues 617–627 (YDPEEGPKHLD) are compositionally biased toward basic and acidic residues. Residues 936–952 (SINSSNPMNQRGETNKH) show a composition bias toward polar residues.

Interacts with YTHDC2; binds transcript that regulate the mitotic cell cycle inhibiting progression into metaphase, thereby allowing meiotic prophase to proceed normally. Interacts with RBM46. As to expression, expressed in fetal ovaries. Expressed in testis.

Its subcellular location is the cytoplasm. The protein resides in the nucleus. Functionally, is required for meiosis completion in both male and female germ cells. Confers stability to numerous meiotic mRNAs in gonads allowing proper initiation and progression into meiosis prophase I. The function may involve YTHDC2 and is independent of induction by retinoic acid (RA). Maintains an extended meiotic prophase I by properly promoting the transition from a mitotic to a meiotic cell cycle program by binding transcripts through its interaction with YTHDC2 that regulate the mitotic cell cycle. In Homo sapiens (Human), this protein is Meiosis-specific coiled-coil domain-containing protein MEIOC.